The following is a 93-amino-acid chain: Large ribosomal subunit protein bL31B (93 aa).

It belongs to the bacterial ribosomal protein bL31 family. Type B subfamily. As to quaternary structure, part of the 50S ribosomal subunit.

The protein is Large ribosomal subunit protein bL31B of Pseudomonas syringae pv. tomato (strain ATCC BAA-871 / DC3000).